A 250-amino-acid chain; its full sequence is uncharacterized protein (250 aa).

This is an uncharacterized protein from Bacillus subtilis (strain 168).